The sequence spans 394 residues: Argininosuccinate synthase (394 aa).

Residue 8-16 (AYSGGLDTS) coordinates ATP. 2 residues coordinate L-citrulline: Tyr-86 and Ser-91. Position 116 (Gly-116) interacts with ATP. The L-aspartate site is built by Thr-118, Asn-122, and Asp-123. An L-citrulline-binding site is contributed by Asn-122. 5 residues coordinate L-citrulline: Arg-126, Ser-172, Ser-181, Glu-257, and Tyr-269.

It belongs to the argininosuccinate synthase family. Type 1 subfamily. As to quaternary structure, homotetramer.

Its subcellular location is the cytoplasm. It carries out the reaction L-citrulline + L-aspartate + ATP = 2-(N(omega)-L-arginino)succinate + AMP + diphosphate + H(+). It participates in amino-acid biosynthesis; L-arginine biosynthesis; L-arginine from L-ornithine and carbamoyl phosphate: step 2/3. This is Argininosuccinate synthase from Methanosarcina acetivorans (strain ATCC 35395 / DSM 2834 / JCM 12185 / C2A).